The sequence spans 642 residues: Threonine--tRNA ligase (642 aa).

One can recognise a TGS domain in the interval 1-61 (MPIITLPDGS…EEDASLEIIT (61 aa)). Residues 244–535 (DHRKIGKQLD…LIEEYAGFFP (292 aa)) form a catalytic region. Residues Cys335, His386, and His512 each contribute to the Zn(2+) site.

Belongs to the class-II aminoacyl-tRNA synthetase family. As to quaternary structure, homodimer. Zn(2+) serves as cofactor.

It localises to the cytoplasm. It catalyses the reaction tRNA(Thr) + L-threonine + ATP = L-threonyl-tRNA(Thr) + AMP + diphosphate + H(+). Its function is as follows. Catalyzes the attachment of threonine to tRNA(Thr) in a two-step reaction: L-threonine is first activated by ATP to form Thr-AMP and then transferred to the acceptor end of tRNA(Thr). Also edits incorrectly charged L-seryl-tRNA(Thr). The polypeptide is Threonine--tRNA ligase (Vibrio vulnificus (strain CMCP6)).